The following is a 269-amino-acid chain: Proline-rich protein 7 (269 aa).

Over 1–9 the chain is Extracellular; it reads MVMSQGTYT. The required for interaction with NMDA receptors stretch occupies residues 1-44; the sequence is MVMSQGTYTFLTCFAGFWLIWGLIVLLCCFCSFLRRRLKRRQEE. Residues 2–39 form a required for membrane localization region; sequence VMSQGTYTFLTCFAGFWLIWGLIVLLCCFCSFLRRRLK. Residues 10-30 form a helical; Signal-anchor for type III membrane protein membrane-spanning segment; that stretch reads FLTCFAGFWLIWGLIVLLCCF. The Cytoplasmic portion of the chain corresponds to 31–269; it reads CSFLRRRLKR…IPLFGRTTAV (239 aa). S64 carries the post-translational modification Phosphoserine. Disordered stretches follow at residues 64–83 and 98–128; these read SLAG…RSRL and LLHH…LSVP. A compositionally biased stretch (basic residues) spans 108 to 117; the sequence is AHPHPHHHAL. A compositionally biased stretch (pro residues) spans 118–128; the sequence is PHPPPSHLSVP. The required for internalization stretch occupies residues 146-166; that stretch reads PCYEEAVLMAEPPPPYSEVLT. Positions 146–269 are required for apoptosis induction; that stretch reads PCYEEAVLMA…IPLFGRTTAV (124 aa). A PDZ-binding motif is present at residues 267–269; that stretch reads TAV.

As to quaternary structure, forms a complex with NMDA receptor zeta subunit GRIN1 and epsilon subunit GRIN2B. Interacts with GRIN2B. Interacts with GRIN1; the interaction is reduced upon NMDA receptor activity. Found in a postsynaptic membrane complex with DLG4 and GRIN1. Interacts with DLG4 (via PDZ3 domain and to lesser degree via PDZ2 domain). Interacts with FBXW7. Found in a complex with JUN and FBXW7. Interacts with JUN and FBXW7; the interaction inhibits ubiquitination-mediated JUN degradation promoting its phosphorylation and transcriptional activity. Interacts with SRC. Post-translationally, palmitoylated. Tyrosine phosphorylated, possibly by SRC. Expressed in brain. Expressed in the cerebral cortex and especially in hippocampal neural cells (at protein level).

The protein localises to the cell membrane. Its subcellular location is the postsynaptic cell membrane. It is found in the postsynaptic density membrane. It localises to the cytoplasm. The protein resides in the perinuclear region. The protein localises to the synapse. Its subcellular location is the cell projection. It is found in the dendrite. It localises to the nucleus. Functionally, acts as a synapse-to-nucleus messenger to promote NMDA receptor-mediated excitotoxicity in neurons in a JUN-dependent manner. Inhibits ubiquitination-mediated degradation and promotes phosphorylation and transcriptional activity of transcription factor JUN. Might play a redundant role in the regulation of T cell receptor signaling. Might promote apoptosis in T cells. This Rattus norvegicus (Rat) protein is Proline-rich protein 7 (Prr7).